A 227-amino-acid polypeptide reads, in one-letter code: Cytochrome c oxidase subunit 2 (227 aa).

Residues 1-14 (MAYPFQLGLQDATS) are Mitochondrial intermembrane-facing. The chain crosses the membrane as a helical span at residues 15-45 (PIMEELLHFHDHTLMIVFLISSLVLYIISLM). Residues 46 to 59 (LTTKLTHTSTMDAQ) are Mitochondrial matrix-facing. Residues 60-87 (EVETVWTILPAIILISIALPSLRILYMM) traverse the membrane as a helical segment. The Mitochondrial intermembrane portion of the chain corresponds to 88 to 227 (DEINNPSLTV…YFEAWSTLMM (140 aa)). Cu cation is bound by residues histidine 161, cysteine 196, glutamate 198, cysteine 200, histidine 204, and methionine 207. A Mg(2+)-binding site is contributed by glutamate 198. Position 218 is a phosphotyrosine (tyrosine 218).

Belongs to the cytochrome c oxidase subunit 2 family. Component of the cytochrome c oxidase (complex IV, CIV), a multisubunit enzyme composed of 14 subunits. The complex is composed of a catalytic core of 3 subunits MT-CO1, MT-CO2 and MT-CO3, encoded in the mitochondrial DNA, and 11 supernumerary subunits COX4I, COX5A, COX5B, COX6A, COX6B, COX6C, COX7A, COX7B, COX7C, COX8 and NDUFA4, which are encoded in the nuclear genome. The complex exists as a monomer or a dimer and forms supercomplexes (SCs) in the inner mitochondrial membrane with NADH-ubiquinone oxidoreductase (complex I, CI) and ubiquinol-cytochrome c oxidoreductase (cytochrome b-c1 complex, complex III, CIII), resulting in different assemblies (supercomplex SCI(1)III(2)IV(1) and megacomplex MCI(2)III(2)IV(2)). Found in a complex with TMEM177, COA6, COX18, COX20, SCO1 and SCO2. Interacts with TMEM177 in a COX20-dependent manner. Interacts with COX20. Interacts with COX16. Requires Cu cation as cofactor.

It localises to the mitochondrion inner membrane. It carries out the reaction 4 Fe(II)-[cytochrome c] + O2 + 8 H(+)(in) = 4 Fe(III)-[cytochrome c] + 2 H2O + 4 H(+)(out). Component of the cytochrome c oxidase, the last enzyme in the mitochondrial electron transport chain which drives oxidative phosphorylation. The respiratory chain contains 3 multisubunit complexes succinate dehydrogenase (complex II, CII), ubiquinol-cytochrome c oxidoreductase (cytochrome b-c1 complex, complex III, CIII) and cytochrome c oxidase (complex IV, CIV), that cooperate to transfer electrons derived from NADH and succinate to molecular oxygen, creating an electrochemical gradient over the inner membrane that drives transmembrane transport and the ATP synthase. Cytochrome c oxidase is the component of the respiratory chain that catalyzes the reduction of oxygen to water. Electrons originating from reduced cytochrome c in the intermembrane space (IMS) are transferred via the dinuclear copper A center (CU(A)) of subunit 2 and heme A of subunit 1 to the active site in subunit 1, a binuclear center (BNC) formed by heme A3 and copper B (CU(B)). The BNC reduces molecular oxygen to 2 water molecules using 4 electrons from cytochrome c in the IMS and 4 protons from the mitochondrial matrix. The protein is Cytochrome c oxidase subunit 2 (MT-CO2) of Lycaon pictus (African wild dog).